A 62-amino-acid chain; its full sequence is MKVIAILFLLAFVLCTMEITMVEAGFGCPLFQFACDSHCRGMGRKGGYCGGNFKLTCICVVK.

Positions 1–24 (MKVIAILFLLAFVLCTMEITMVEA) are cleaved as a signal peptide. 3 disulfides stabilise this stretch: Cys28–Cys49, Cys35–Cys57, and Cys39–Cys59.

This sequence belongs to the invertebrate defensin family. Type 2 subfamily. In terms of tissue distribution, highly expressed in non-venom gland (hemolymph) and moderately expressed in venom gland.

It localises to the secreted. Antibacterial peptide active against Gram-positive bacteria, but not on Gram-negative bacteria. Also has weak blocking activity on Kv1.1/KCNA1, Kv1.2/KCNA2, Kv1.3/KCNA3, KCa3.1/KCNN4/IK, KCa2.3/KCNN3/SK3 and Kv11.1/KCNH2/ERG1 channels (tested at 1 uM). It inhibits potassium channel current by interacting with the pore region. This is Defensin BmKDfsin6 from Olivierus martensii (Manchurian scorpion).